An 81-amino-acid chain; its full sequence is Small ribosomal subunit protein eS21 (81 aa).

The protein belongs to the eukaryotic ribosomal protein eS21 family.

This Zea mays (Maize) protein is Small ribosomal subunit protein eS21 (RPS21).